Reading from the N-terminus, the 548-residue chain is Chaperonin GroEL (548 aa).

ATP contacts are provided by residues 29–32 (TMGP), K50, 86–90 (DGTTT), G414, 478–480 (NAA), and D494.

Belongs to the chaperonin (HSP60) family. As to quaternary structure, forms a cylinder of 14 subunits composed of two heptameric rings stacked back-to-back. Interacts with the co-chaperonin GroES.

It localises to the cytoplasm. The catalysed reaction is ATP + H2O + a folded polypeptide = ADP + phosphate + an unfolded polypeptide.. Its function is as follows. Together with its co-chaperonin GroES, plays an essential role in assisting protein folding. The GroEL-GroES system forms a nano-cage that allows encapsulation of the non-native substrate proteins and provides a physical environment optimized to promote and accelerate protein folding. Functionally, may play a protective role against the defense mechanisms generated by the infected macrophages. In Legionella pneumophila subsp. pneumophila (strain Philadelphia 1 / ATCC 33152 / DSM 7513), this protein is Chaperonin GroEL.